The primary structure comprises 186 residues: Protein SPMIP2 (186 aa).

The interval 163–186 (SSLPRASKPPKLPKLPKKEKKRKH) is disordered. The segment covering 176–186 (KLPKKEKKRKH) has biased composition (basic residues).

The polypeptide is Protein SPMIP2 (Homo sapiens (Human)).